We begin with the raw amino-acid sequence, 454 residues long: Arginine biosynthesis bifunctional protein ArgJ, mitochondrial (454 aa).

Substrate is bound by residues threonine 184, lysine 213, threonine 224, glutamate 311, asparagine 449, and threonine 454. The active-site Nucleophile is threonine 224.

Belongs to the ArgJ family. As to quaternary structure, heterodimer of an alpha and a beta chain. Post-translationally, the alpha and beta chains are autoproteolytically processed from a single precursor protein within the mitochondrion.

It localises to the mitochondrion matrix. The enzyme catalyses N(2)-acetyl-L-ornithine + L-glutamate = N-acetyl-L-glutamate + L-ornithine. It catalyses the reaction L-glutamate + acetyl-CoA = N-acetyl-L-glutamate + CoA + H(+). Its pathway is amino-acid biosynthesis; L-arginine biosynthesis; L-ornithine and N-acetyl-L-glutamate from L-glutamate and N(2)-acetyl-L-ornithine (cyclic): step 1/1. It functions in the pathway amino-acid biosynthesis; L-arginine biosynthesis; N(2)-acetyl-L-ornithine from L-glutamate: step 1/4. Functionally, catalyzes two activities which are involved in the cyclic version of arginine biosynthesis: the synthesis of acetylglutamate from glutamate and acetyl-CoA, and of ornithine by transacetylation between acetylornithine and glutamate. The polypeptide is Arginine biosynthesis bifunctional protein ArgJ, mitochondrial (Aspergillus clavatus (strain ATCC 1007 / CBS 513.65 / DSM 816 / NCTC 3887 / NRRL 1 / QM 1276 / 107)).